Reading from the N-terminus, the 239-residue chain is Large ribosomal subunit protein uL1 (239 aa).

The protein belongs to the universal ribosomal protein uL1 family. In terms of assembly, part of the 50S ribosomal subunit.

In terms of biological role, binds directly to 23S rRNA. The L1 stalk is quite mobile in the ribosome, and is involved in E site tRNA release. Its function is as follows. Protein L1 is also a translational repressor protein, it controls the translation of the L11 operon by binding to its mRNA. The chain is Large ribosomal subunit protein uL1 from Rickettsia africae (strain ESF-5).